The following is a 438-amino-acid chain: Aspartate--tRNA(Asp) ligase (438 aa).

E170 lines the L-aspartate pocket. An aspartate region spans residues Q192–K195. L-aspartate is bound at residue R214. Residues R214–E216, R222–L224, and E361 contribute to the ATP site. Mg(2+) is bound by residues E361 and S364. Residues S364 and R368 each coordinate L-aspartate. G409–R412 contributes to the ATP binding site.

The protein belongs to the class-II aminoacyl-tRNA synthetase family. Type 2 subfamily. In terms of assembly, homodimer. Mg(2+) serves as cofactor.

The protein resides in the cytoplasm. It carries out the reaction tRNA(Asp) + L-aspartate + ATP = L-aspartyl-tRNA(Asp) + AMP + diphosphate. In terms of biological role, catalyzes the attachment of L-aspartate to tRNA(Asp) in a two-step reaction: L-aspartate is first activated by ATP to form Asp-AMP and then transferred to the acceptor end of tRNA(Asp). Is specific for tRNA(Asp) since it aspartylates tRNA(Asn) 3 orders of magnitude less efficiently than tRNA(Asp). This is Aspartate--tRNA(Asp) ligase from Thermococcus kodakarensis (strain ATCC BAA-918 / JCM 12380 / KOD1) (Pyrococcus kodakaraensis (strain KOD1)).